We begin with the raw amino-acid sequence, 20 residues long: Fibrinolytic zinc metalloproteinase (20 aa).

The Peptidase M12B domain maps to 7 to 20; that stretch reads RYVQLVITVDHVMN.

Zn(2+) is required as a cofactor.

Its subcellular location is the secreted. Hydrolyzes alpha and beta chains of human fibrinogen and human fibrin. No activity against the gamma chain of human fibrinogen, human thrombin, bovine serum albumin, ovalbumin and hemoglobin. Has anticoagulant activity on human plasma and protects mice against death due from experimentally induced platelet thromboembolism with an ED(50) of 40 ug/kg. The sequence is that of Fibrinolytic zinc metalloproteinase from Ganoderma lucidum (Ling zhi medicinal fungus).